The chain runs to 126 residues: Aspartate 1-decarboxylase (126 aa).

Serine 25 acts as the Schiff-base intermediate with substrate; via pyruvic acid in catalysis. Position 25 is a pyruvic acid (Ser) (serine 25). Threonine 57 provides a ligand contact to substrate. The Proton donor role is filled by tyrosine 58. 73–75 is a binding site for substrate; that stretch reads GAA.

This sequence belongs to the PanD family. Heterooctamer of four alpha and four beta subunits. Pyruvate is required as a cofactor. In terms of processing, is synthesized initially as an inactive proenzyme, which is activated by self-cleavage at a specific serine bond to produce a beta-subunit with a hydroxyl group at its C-terminus and an alpha-subunit with a pyruvoyl group at its N-terminus.

It is found in the cytoplasm. The catalysed reaction is L-aspartate + H(+) = beta-alanine + CO2. It participates in cofactor biosynthesis; (R)-pantothenate biosynthesis; beta-alanine from L-aspartate: step 1/1. Functionally, catalyzes the pyruvoyl-dependent decarboxylation of aspartate to produce beta-alanine. This Nitrosococcus oceani (strain ATCC 19707 / BCRC 17464 / JCM 30415 / NCIMB 11848 / C-107) protein is Aspartate 1-decarboxylase.